The following is a 61-amino-acid chain: Bactridin-1 (61 aa).

One can recognise an LCN-type CS-alpha/beta domain in the interval 1–61 (KDGYIIEHRG…KIFDSNNLKC (61 aa)). Intrachain disulfides connect Cys-11/Cys-61, Cys-15/Cys-37, Cys-23/Cys-42, and Cys-27/Cys-44.

Belongs to the long (4 C-C) scorpion toxin superfamily. Sodium channel inhibitor family. Beta subfamily. As to expression, expressed by the venom gland.

It localises to the secreted. Functionally, shows antibacterial activity against both Gram-positive bacteria (B.subtilis, M.luteus, E.faecalis) and Gram-negative bacteria (P.aeruginosa, Y.enterocolitica, A.calcoaceticus). Modifies membrane sodium permeability on Y.enterocolitica. Is toxic to cockroaches and crabs, but is not toxic to mice. Does not induce haemolysis in human erythrocytes. Acts by inhibiting the sodium (Nav) currents. In Tityus discrepans (Venezuelan scorpion), this protein is Bactridin-1.